Here is a 75-residue protein sequence, read N- to C-terminus: Dermaseptin-SP3 (75 aa).

Positions 1 to 22 (MAFLKKSLFLVLFLGLVSLSMC) are cleaved as a signal peptide. Residues 23–45 (EEEKRENEVEEEQEDDEQSELRR) constitute a propeptide that is removed on maturation. Pro72 is subject to Proline amide. The propeptide occupies 74–75 (EQ).

It belongs to the frog skin active peptide (FSAP) family. Dermaseptin subfamily. In terms of tissue distribution, expressed by the skin glands.

It is found in the secreted. It localises to the target cell membrane. In terms of biological role, antimicrobial peptide with activity against Gram-positive and Gram-negative bacteria and fungi. Has been tested against E.coli (MIC=47.50-128 uM), S.aureus (MIC=189.98-512 uM), K.pneumoniae (MIC&gt;189.98 uM) and C.albicans (MIC&gt;189.98 uM). Probably acts by disturbing membrane functions with its alpha-helical amphipathic structure. May penetrate bacterial membranes, but stay at the mammalian membrane surface. Shows a very weak hemolytic activity. This Agalychnis spurrelli (Gliding leaf frog) protein is Dermaseptin-SP3.